The following is a 36-amino-acid chain: Beta/delta/mu-theraphotoxin-Pv1 (36 aa).

3 cysteine pairs are disulfide-bonded: C3–C17, C10–C22, and C16–C30. Phenylalanine amide is present on F36.

This sequence belongs to the neurotoxin 10 (Hwtx-1) family. Expressed by the venom gland.

Its subcellular location is the secreted. Its function is as follows. Gating-modifier toxin that targets voltage-gated sodium channels. Inhibits the inactivation of Nav1.7/SCN9A. The chain is Beta/delta/mu-theraphotoxin-Pv1 from Poecilotheria vittata (Ghost ornamental tarantula).